The following is a 349-amino-acid chain: Sensory histidine kinase/phosphatase NtrB (349 aa).

One can recognise a PAS domain in the interval 5–78 (TQPDAGQILN…SLEAGQGFTD (74 aa)). The region spanning 136–349 (GLAHEIKNPL…EFSVYLPIRK (214 aa)) is the Histidine kinase domain. His139 is modified (phosphohistidine; by autocatalysis). Residue Lys329 coordinates ATP.

Post-translationally, autophosphorylated.

The protein resides in the cytoplasm. The catalysed reaction is ATP + protein L-histidine = ADP + protein N-phospho-L-histidine.. In terms of biological role, member of the two-component regulatory system NtrB/NtrC, which controls expression of the nitrogen-regulated (ntr) genes in response to nitrogen limitation. Under conditions of nitrogen limitation, NtrB autophosphorylates and transfers the phosphoryl group to NtrC. In the presence of nitrogen, acts as a phosphatase that dephosphorylates and inactivates NtrC. This Escherichia coli O157:H7 protein is Sensory histidine kinase/phosphatase NtrB (glnL).